Consider the following 402-residue polypeptide: F-box protein At4g22390 (402 aa).

The F-box domain occupies 1 to 49 (MAECPTDLINEMFLRLRATTLVKCRVLSKPCFSLIDSPEFVSSHLRRRL).

This chain is F-box protein At4g22390, found in Arabidopsis thaliana (Mouse-ear cress).